Consider the following 21-residue polypeptide: Conchiolin protein p20 (21 aa).

Over residues 1–14 the composition is skewed to low complexity; the sequence is YQRXSRYYYYXGPP. The interval 1-21 is disordered; it reads YQRXSRYYYYXGPPDDIDDRY.

Belongs to the N16 matrix protein family. As to quaternary structure, homooligomer; disulfide-linked. May also be disulfide-linked to insoluble organic matrix. According to PubMed:11250534, amino acids 4 and 11 may be sulfated or phosphorylated. By similarity with the N14 matrix protein, amino-acid 4 may be a cysteine involved in a disulfide bond. As to expression, component of conchiolin, the organic matrix of nacre. Is dispersed in calcium carbonate and also linked by disulfide bonds to the organic core of nacre.

The protein resides in the secreted. It localises to the extracellular space. Its subcellular location is the extracellular matrix. May be specifically involved in the formation of the nacreous layer. The chain is Conchiolin protein p20 from Pinctada maxima (Silver-lipped pearl oyster).